Here is a 78-residue protein sequence, read N- to C-terminus: MTDSIPKKPFKKGSLVFVDRENYIKSIEALASDDDLPNYVFEGPGEILSVKDEYAQVRWRRPVPDVWLKLDQLKEYTQ.

Belongs to the complex I NdhO subunit family. NDH-1 can be composed of about 15 different subunits; different subcomplexes with different compositions have been identified which probably have different functions.

It localises to the cellular thylakoid membrane. It catalyses the reaction a plastoquinone + NADH + (n+1) H(+)(in) = a plastoquinol + NAD(+) + n H(+)(out). It carries out the reaction a plastoquinone + NADPH + (n+1) H(+)(in) = a plastoquinol + NADP(+) + n H(+)(out). In terms of biological role, NDH-1 shuttles electrons from an unknown electron donor, via FMN and iron-sulfur (Fe-S) centers, to quinones in the respiratory and/or the photosynthetic chain. The immediate electron acceptor for the enzyme in this species is believed to be plastoquinone. Couples the redox reaction to proton translocation, and thus conserves the redox energy in a proton gradient. Cyanobacterial NDH-1 also plays a role in inorganic carbon-concentration. In Prochlorococcus marinus (strain MIT 9215), this protein is NAD(P)H-quinone oxidoreductase subunit O.